The chain runs to 457 residues: Proline-specific permease ProY (457 aa).

The Cytoplasmic portion of the chain corresponds to 1 to 17; it reads MESKNKLKRGLSTRHIR. Transmembrane regions (helical) follow at residues 18–38 and 39–59; these read FMAL…DAIK and MAGP…YIIM. Over 60–84 the chain is Cytoplasmic; the sequence is RALGEMSVHNPAASSFSRYAQENLG. The helical transmembrane segment at 85 to 105 threads the bilayer; it reads PLAGYITGWTYCFEILIVAIA. The Periplasmic portion of the chain corresponds to 106–113; it reads DVTAFGIY. The chain crosses the membrane as a helical span at residues 114 to 134; the sequence is MGVWFPTVPHWIWVLSVVLII. Topologically, residues 135 to 156 are cytoplasmic; the sequence is CAVNLMSVKVFGELEFWFSFFK. The chain crosses the membrane as a helical span at residues 157–177; it reads VATIIIMIVAGFGIIIWGIGN. Over 178 to 197 the chain is Periplasmic; it reads GGQPTGIHNLWSNGGFFSNG. The chain crosses the membrane as a helical span at residues 198–218; that stretch reads WLGMVMSLQMVMFAYGGIEII. Over 219–242 the chain is Cytoplasmic; sequence GITAGEAKDPEKSIPRAINSVPMR. The helical transmembrane segment at 243 to 263 threads the bilayer; sequence ILVFYVGTLFVIMSIYPWNQV. Residues 264-277 lie on the Periplasmic side of the membrane; it reads GTAGSPFVLTFQHM. The helical transmembrane segment at 278 to 298 threads the bilayer; the sequence is GITFAASILNFVVLTASLSAI. The Cytoplasmic portion of the chain corresponds to 299 to 331; that stretch reads NSDVFGVGRMLHGMAEQGSAPKIFSKTSRRGIP. A helical membrane pass occupies residues 332 to 352; that stretch reads WVTVLVMTTALLFAVYLNYIM. Residues 353–355 are Periplasmic-facing; it reads PEN. A helical transmembrane segment spans residues 356–376; the sequence is VFLVIASLATFATVWVWIMIL. Residues 377–399 lie on the Cytoplasmic side of the membrane; that stretch reads LSQIAFRRRLPPEEVKALKFKVP. Residues 400–420 form a helical membrane-spanning segment; sequence GGVATTIGGLIFLLFIIGLIG. Residues 421–424 lie on the Periplasmic side of the membrane; the sequence is YHPD. Residues 425–445 form a helical membrane-spanning segment; it reads TRISLYVGFAWIVVLLIGWMF. The Cytoplasmic portion of the chain corresponds to 446 to 457; it reads KRRHDRQLAENQ.

Belongs to the amino acid-polyamine-organocation (APC) superfamily. Amino acid transporter (AAT) (TC 2.A.3.1) family.

Its subcellular location is the cell inner membrane. Its function is as follows. Permease that is involved in the transport across the cytoplasmic membrane of proline. In Escherichia coli O157:H7, this protein is Proline-specific permease ProY (proY).